The primary structure comprises 246 residues: 2-C-methyl-D-erythritol 4-phosphate cytidylyltransferase (246 aa).

Belongs to the IspD/TarI cytidylyltransferase family. IspD subfamily.

It carries out the reaction 2-C-methyl-D-erythritol 4-phosphate + CTP + H(+) = 4-CDP-2-C-methyl-D-erythritol + diphosphate. It participates in isoprenoid biosynthesis; isopentenyl diphosphate biosynthesis via DXP pathway; isopentenyl diphosphate from 1-deoxy-D-xylulose 5-phosphate: step 2/6. Its function is as follows. Catalyzes the formation of 4-diphosphocytidyl-2-C-methyl-D-erythritol from CTP and 2-C-methyl-D-erythritol 4-phosphate (MEP). This Chlorobaculum tepidum (strain ATCC 49652 / DSM 12025 / NBRC 103806 / TLS) (Chlorobium tepidum) protein is 2-C-methyl-D-erythritol 4-phosphate cytidylyltransferase.